The primary structure comprises 389 residues: MPKLNCHHFEQNRCNSCQWLHKSYTEQLAEKTSDLKRLVSPYLLQSTEFLPAVTSPLAHFRNKAKMVVTGSVERPILGILNDDGTGTDLTDCPLYPQAFTPLFPILKTFIGRAGLVPYNVAKKRGELKYILITQSQHNQSLMIRFVLRSELKRPLVERELPMLLAQLPEKSVVSLNIQPQHSAILEGEQEIFLTEQQVLEERFNQIPLFIRPQGFFQTNPTVASQLYHTAQEWIKERPITQLWDLFCGVGGFGLHCANTLQTNNPNVALTGIEISASAIASATKSAQQLGLQNVKFASLDSAQFALNEQGTTPDLVIVNPPRRGIGKPLAEFINQLGSPYLIYSSCNAETMAKDFASLSHYELKKVQLFDMFPHTAHYEVLTFLVNKII.

Residues Cys6, Cys14, Cys17, and Cys92 each contribute to the [4Fe-4S] cluster site. Positions 217, 246, 273, and 319 each coordinate S-adenosyl-L-methionine. Cys346 functions as the Nucleophile in the catalytic mechanism.

This sequence belongs to the class I-like SAM-binding methyltransferase superfamily. RNA M5U methyltransferase family. RlmC subfamily.

The catalysed reaction is uridine(747) in 23S rRNA + S-adenosyl-L-methionine = 5-methyluridine(747) in 23S rRNA + S-adenosyl-L-homocysteine + H(+). Catalyzes the formation of 5-methyl-uridine at position 747 (m5U747) in 23S rRNA. This Glaesserella parasuis serovar 5 (strain SH0165) (Haemophilus parasuis) protein is 23S rRNA (uracil(747)-C(5))-methyltransferase RlmC.